The chain runs to 75 residues: Porwaprin-d (75 aa).

The first 24 residues, 1-24 (MSSGGLLLLLGLLTLWAELTPVSS), serve as a signal peptide directing secretion. The 46-residue stretch at 27–72 (RPKKPGLCPPRPQKPPCVRECKNDWRCPGEQKCCRYGCIYECRDPI) folds into the WAP domain. Cystine bridges form between Cys34-Cys60, Cys43-Cys64, Cys47-Cys59, and Cys53-Cys68.

It belongs to the venom waprin family. In terms of tissue distribution, expressed by the venom gland.

The protein resides in the secreted. Functionally, damages membranes of susceptible bacteria. Has no hemolytic activity. Not toxic to mice. Does not inhibit the proteinases elastase and cathepsin G. This chain is Porwaprin-d, found in Pseudechis porphyriacus (Red-bellied black snake).